The primary structure comprises 249 residues: Vacuolar iron transporter homolog 3 (249 aa).

A disordered region spans residues 1–32; sequence MAMQMNSVVHVSTSPSPSPATSPPPEGKQEHG. The Cytoplasmic portion of the chain corresponds to 1 to 74; it reads MAMQMNSVVH…SGRAQWLRAA (74 aa). A compositionally biased stretch (pro residues) spans 16-26; sequence SPSPATSPPPE. A helical membrane pass occupies residues 75–95; that stretch reads VLGANDGLVSVASLMIGVGAV. Residues 96 to 102 are Vacuolar-facing; sequence SESGRAM. The helical transmembrane segment at 103–123 threads the bilayer; that stretch reads LVSGVAGLVAGACSMAIGEFV. The Cytoplasmic segment spans residues 124–166; that stretch reads SVYAQYDIEVAAARRRRRQRRRRCDGDGEEEGSGRLPSPFKAA. The helical transmembrane segment at 167-187 threads the bilayer; the sequence is AASALAFTVGALLPLLAGGFV. The Vacuolar portion of the chain corresponds to 188–193; that stretch reads RPWAPR. The helical transmembrane segment at 194-214 threads the bilayer; sequence VAAVCAATSAALAGFGALGAA. Residues 215-226 are Cytoplasmic-facing; sequence LGGASPARSAAR. Residues 227-247 form a helical membrane-spanning segment; the sequence is VLLGGWAAMAACYGVLRLFAN. At 248–249 the chain is on the vacuolar side; that stretch reads LY.

It belongs to the CCC1 family.

Its subcellular location is the vacuole membrane. It carries out the reaction Fe(2+)(in) = Fe(2+)(out). Functionally, probable vacuolar iron transporter that may be involved in the regulation of iron distribution throughout the plant. The sequence is that of Vacuolar iron transporter homolog 3 from Oryza sativa subsp. japonica (Rice).